The following is a 421-amino-acid chain: Glycosaminoglycan xylosylkinase homolog (421 aa).

Residues 1–21 (MNKRSVIIAGIVASLLGLALG) form the signal peptide. The N-linked (GlcNAc...) asparagine glycan is linked to Asn83. 2 residues coordinate ATP: Gln131 and Lys147. Residue Asp166 participates in Mn(2+) binding. 2 disulfide bridges follow: Cys225–Cys240 and Cys230–Cys233. 252–255 (IYIV) serves as a coordination point for ATP. Intrachain disulfides connect Cys285–Cys351 and Cys352–Cys409. The active site involves Asp314. Residues Glu319 and Asp329 each contribute to the ATP site. Asp329 lines the Mn(2+) pocket.

Belongs to the FAM20 family. The cofactor is Mn(2+).

Its subcellular location is the golgi apparatus. The protein localises to the endoplasmic reticulum. It carries out the reaction 3-O-(beta-D-galactosyl-(1-&gt;3)-beta-D-galactosyl-(1-&gt;4)-beta-D-xylosyl)-L-seryl-[protein] + ATP = 3-O-(beta-D-galactosyl-(1-&gt;3)-beta-D-galactosyl-(1-&gt;4)-beta-D-2-O-phosphoxylosyl)-L-seryl-[protein] + ADP + H(+). In terms of biological role, kylose kinase that mediates the 2-O-phosphorylation of xylose in the glycosaminoglycan-protein linkage region of proteoglycans. The protein is Glycosaminoglycan xylosylkinase homolog of Drosophila melanogaster (Fruit fly).